Reading from the N-terminus, the 421-residue chain is 3-isopropylmalate dehydratase large subunit (421 aa).

Cysteine 302, cysteine 362, and cysteine 365 together coordinate [4Fe-4S] cluster.

The protein belongs to the aconitase/IPM isomerase family. LeuC type 2 subfamily. In terms of assembly, heterodimer of LeuC and LeuD. Requires [4Fe-4S] cluster as cofactor.

The enzyme catalyses (2R,3S)-3-isopropylmalate = (2S)-2-isopropylmalate. Its pathway is amino-acid biosynthesis; L-leucine biosynthesis; L-leucine from 3-methyl-2-oxobutanoate: step 2/4. In terms of biological role, catalyzes the isomerization between 2-isopropylmalate and 3-isopropylmalate, via the formation of 2-isopropylmaleate. The sequence is that of 3-isopropylmalate dehydratase large subunit from Campylobacter fetus subsp. fetus (strain 82-40).